We begin with the raw amino-acid sequence, 229 residues long: MTVSLARLERQLGYTFKDQELMVLALTHRSFAGRNNERLEFLGDAILNFVAGEALFERFPQAREGQLSRLRARLVKGETLAVLARGFGLGEYLRLGSGELKSGGFRRESILADALEALIGAIYLDAGMEAAKERVTAWLTSEIESLTLVDTNKDPKTRLQEFLQSRGCELPRYEVVDIQGEPHCRVFFVECEITLLNEKSRGQGVSRRIAEQVAAAAALIALGVENGHD.

The 123-residue stretch at 5–127 folds into the RNase III domain; that stretch reads LARLERQLGY…LIGAIYLDAG (123 aa). Glutamate 40 contacts Mg(2+). The active site involves aspartate 44. Mg(2+) contacts are provided by aspartate 113 and glutamate 116. Glutamate 116 is an active-site residue. A DRBM domain is found at 154–224; it reads DPKTRLQEFL…AAAALIALGV (71 aa).

It belongs to the ribonuclease III family. Homodimer. The cofactor is Mg(2+).

The protein resides in the cytoplasm. It catalyses the reaction Endonucleolytic cleavage to 5'-phosphomonoester.. Its function is as follows. Digests double-stranded RNA. Involved in the processing of primary rRNA transcript to yield the immediate precursors to the large and small rRNAs (23S and 16S). Processes some mRNAs, and tRNAs when they are encoded in the rRNA operon. Processes pre-crRNA and tracrRNA of type II CRISPR loci if present in the organism. The protein is Ribonuclease 3 of Pseudomonas fluorescens (strain SBW25).